A 189-amino-acid chain; its full sequence is Leucine repeat adapter protein 25 (189 aa).

The residue at position 28 (serine 28) is a Phosphoserine. Residues 54-83 are disordered; that stretch reads ELSRAARAPDGPRHAAGAANAGPAAGPRRP. A compositionally biased stretch (low complexity) spans 67–83; it reads HAAGAANAGPAAGPRRP. The stretch at 86-114 is one LRR repeat; it reads LDSALAALRKEMVGLRQLDMSLLCQLWGL. A disordered region spans residues 141 to 175; sequence DSSYPPDAGLSDDEEPPDASLPPDPPPLTVPQTHN. A compositionally biased stretch (pro residues) spans 159–169; the sequence is ASLPPDPPPLT. Phosphoserine is present on serine 188.

It belongs to the FAM89 family. In terms of assembly, interacts with SKI. Interacts (via LRR repeat) with CDC42BPA (via AGC-kinase C-terminal domain), CDC42BPB (via AGC-kinase C-terminal domain) and LIMK1 (via LIM zinc-binding domains). Forms a tripartite complex with CDC42BPA, CDC42BPB and LIMK1.

It is found in the cytoplasm. Its subcellular location is the cell projection. It localises to the lamellipodium. Its function is as follows. Negatively regulates TGF-beta-induced signaling; in cooperation with SKI prevents the translocation of SMAD2 from the nucleus to the cytoplasm in response to TGF-beta. Acts as an adapter that mediates the specific recognition of LIMK1 by CDC42BPA and CDC42BPB in the lamellipodia. LRAP25-mediated CDC42BPA/CDC42BPB targeting to LIMK1 and the lamellipodium results in LIMK1 activation and the subsequent phosphorylation of CFL1 which is important for lamellipodial F-actin regulation. The sequence is that of Leucine repeat adapter protein 25 (FAM89B) from Homo sapiens (Human).